The chain runs to 167 residues: uncharacterized protein (167 aa).

Belongs to the A.longa ORF167/ORF288 family.

The protein resides in the plastid. This is an uncharacterized protein from Euglena longa (Euglenophycean alga).